The sequence spans 358 residues: GTPase Obg (358 aa).

One can recognise an Obg domain in the interval 1–158 (MFVDNVDIYV…RHVRLELKLI (158 aa)). The OBG-type G domain occupies 159–355 (ADVGLVGFPN…LKYLLHESVR (197 aa)). GTP is bound by residues 165–172 (GFPNVGKS), 190–194 (FTTLI), 212–215 (DIPG), 280–283 (SKVD), and 336–338 (SSA). Residues serine 172 and threonine 192 each contribute to the Mg(2+) site.

This sequence belongs to the TRAFAC class OBG-HflX-like GTPase superfamily. OBG GTPase family. Monomer. Requires Mg(2+) as cofactor.

Its subcellular location is the cytoplasm. Its function is as follows. An essential GTPase which binds GTP, GDP and possibly (p)ppGpp with moderate affinity, with high nucleotide exchange rates and a fairly low GTP hydrolysis rate. Plays a role in control of the cell cycle, stress response, ribosome biogenesis and in those bacteria that undergo differentiation, in morphogenesis control. This is GTPase Obg from Wolinella succinogenes (strain ATCC 29543 / DSM 1740 / CCUG 13145 / JCM 31913 / LMG 7466 / NCTC 11488 / FDC 602W) (Vibrio succinogenes).